Reading from the N-terminus, the 121-residue chain is MCRGLNNEESRRSDGGGCRSLCTRPSVPVRCELCDGDASVFCEADSAFLCRKCDRWVHGANFLAWRHVRRVLCTSCQKLTRRCLVGDHDFHVVLPSVTTVGETTVENRSEQDNHEVPFVFL.

The segment at 26-72 adopts a B box-type; atypical zinc-finger fold; it reads SVPVRCELCDGDASVFCEADSAFLCRKCDRWVHGANFLAWRHVRRVL. A PFVFL motif is present at residues 117 to 121; sequence PFVFL.

In terms of tissue distribution, highly expressed in shoot apical meristems and in vascular tissues of leaves. Also detected in petioles.

Functionally, developmental regulator acting by forming heterodimeric complexes, that sequester CO and CO-like (COL) proteins into non-functional complexes. Involved in the CO-mediated long-day flowering-promotion pathway. Engages CO and the transcriptional repressor TPL in a tripartite complex. This chain is B-box domain protein 31, found in Arabidopsis thaliana (Mouse-ear cress).